Consider the following 156-residue polypeptide: Ribonuclease 1B pancreatic (156 aa).

The signal sequence occupies residues 1-28 (MALDKSVIPLPLLVVVLLVLGWAQPSLG). Lys-35 and Arg-38 together coordinate substrate. His-40 (proton acceptor) is an active-site residue. Cystine bridges form between Cys-54-Cys-112, Cys-68-Cys-123, Cys-86-Cys-138, and Cys-93-Cys-100. N-linked (GlcNAc...) asparagine glycosylation occurs at Asn-62. Residues 69–73 (KSVNT), Lys-94, and Arg-113 each bind substrate. N-linked (GlcNAc...) asparagine glycosylation is present at Asn-116. His-147 functions as the Proton donor in the catalytic mechanism.

This sequence belongs to the pancreatic ribonuclease family. In terms of assembly, monomer.

It is found in the secreted. It carries out the reaction an [RNA] containing cytidine + H2O = an [RNA]-3'-cytidine-3'-phosphate + a 5'-hydroxy-ribonucleotide-3'-[RNA].. It catalyses the reaction an [RNA] containing uridine + H2O = an [RNA]-3'-uridine-3'-phosphate + a 5'-hydroxy-ribonucleotide-3'-[RNA].. Functionally, endonuclease that catalyzes the cleavage of RNA on the 3' side of pyrimidine nucleotides. Compared to RNASE1 it has lost activity towards dsRNA. In Pygathrix nemaeus (Red-shanked douc langur), this protein is Ribonuclease 1B pancreatic (RNASE1B).